Reading from the N-terminus, the 454-residue chain is Cerebellar degeneration-related protein 2 (454 aa).

2 coiled-coil regions span residues 44–142 (ELED…SGQG) and 192–265 (EEEN…QSEH). The tract at residues 134 to 153 (EELKSSGQGRRSPGKCDQEK) is disordered. The residue at position 311 (Ser-311) is a Phosphoserine. A coiled-coil region spans residues 346 to 380 (LHEVDTQYSALKVKYEELLKKCQEEQDSLSHKAVQ).

It belongs to the CDR2 family.

This chain is Cerebellar degeneration-related protein 2 (CDR2), found in Homo sapiens (Human).